The sequence spans 167 residues: NAD(P)H-quinone oxidoreductase subunit I, chloroplastic (167 aa).

2 consecutive 4Fe-4S ferredoxin-type domains span residues 55 to 84 (GRIH…VDWK) and 95 to 124 (LNYS…MTEE). Positions 64, 67, 70, 74, 104, 107, 110, and 114 each coordinate [4Fe-4S] cluster.

The protein belongs to the complex I 23 kDa subunit family. In terms of assembly, NDH is composed of at least 16 different subunits, 5 of which are encoded in the nucleus. The cofactor is [4Fe-4S] cluster.

It localises to the plastid. Its subcellular location is the chloroplast thylakoid membrane. The enzyme catalyses a plastoquinone + NADH + (n+1) H(+)(in) = a plastoquinol + NAD(+) + n H(+)(out). The catalysed reaction is a plastoquinone + NADPH + (n+1) H(+)(in) = a plastoquinol + NADP(+) + n H(+)(out). Its function is as follows. NDH shuttles electrons from NAD(P)H:plastoquinone, via FMN and iron-sulfur (Fe-S) centers, to quinones in the photosynthetic chain and possibly in a chloroplast respiratory chain. The immediate electron acceptor for the enzyme in this species is believed to be plastoquinone. Couples the redox reaction to proton translocation, and thus conserves the redox energy in a proton gradient. The polypeptide is NAD(P)H-quinone oxidoreductase subunit I, chloroplastic (Solanum tuberosum (Potato)).